The primary structure comprises 952 residues: Aminopeptidase 2, mitochondrial (952 aa).

The N-terminal 52 residues, 1-52, are a transit peptide targeting the mitochondrion; it reads MPIVRWLLLKSAVRGSSLIGKAHPCLRSIAAHPRYLSNVYSPPAGVSRSLRI. Residues Glu228 and 360 to 364 each bind substrate; that span reads GAMEN. Asn381 carries N-linked (GlcNAc...) asparagine glycosylation. His396 provides a ligand contact to Zn(2+). The active-site Proton acceptor is the Glu397. Positions 400 and 419 each coordinate Zn(2+). N-linked (GlcNAc...) asparagine glycosylation occurs at Asn713.

Belongs to the peptidase M1 family. The cofactor is Zn(2+).

It is found in the periplasm. It localises to the cytoplasm. The protein resides in the mitochondrion. Functionally, involved in the cellular supply of leucine from externally offered leucine-containing dipeptide substrates. The polypeptide is Aminopeptidase 2, mitochondrial (APE2) (Saccharomyces cerevisiae (strain ATCC 204508 / S288c) (Baker's yeast)).